Consider the following 399-residue polypeptide: MGTYALPDAFGHYGPYGGRFVAETLIPALEELERAYQEAQRDPEFRAELHSELRQFVGRPNPLYHAGRLSRELGGAQIYLKREDLNHTGAHKINNAVGQALLARRMGKKRVIAETGAGQHGVATATVATRYGMECLVYMGEEDIQRQSSNVFRMRLLGAQVTAVSSGTRTLKDALNEALRDWVTNVESTFYVIGTVAGPHPYPVMVRDFHRVIGDEARAQCLELTGRLPDCLIACVGGGSNAIGLFYPFIEDRAVRMIGVEAGGLGLGTGQHAAPLTTGRPGVLHGNRTYLMEDEDGQILPTHSISAGLDYPGVGPEHAYLKDTGRAEYVAATDEEALAAFHRLCRTEGIIPALESAHALAHAFRLAPTMRSDQTIIVNLSGRGDKDIHTVAALEGIHL.

At lysine 92 the chain carries N6-(pyridoxal phosphate)lysine.

It belongs to the TrpB family. As to quaternary structure, tetramer of two alpha and two beta chains. The cofactor is pyridoxal 5'-phosphate.

The enzyme catalyses (1S,2R)-1-C-(indol-3-yl)glycerol 3-phosphate + L-serine = D-glyceraldehyde 3-phosphate + L-tryptophan + H2O. The protein operates within amino-acid biosynthesis; L-tryptophan biosynthesis; L-tryptophan from chorismate: step 5/5. Functionally, the beta subunit is responsible for the synthesis of L-tryptophan from indole and L-serine. The chain is Tryptophan synthase beta chain from Acidithiobacillus ferrooxidans (strain ATCC 23270 / DSM 14882 / CIP 104768 / NCIMB 8455) (Ferrobacillus ferrooxidans (strain ATCC 23270)).